We begin with the raw amino-acid sequence, 138 residues long: Basic phospholipase A2 DsM-b1/DsM-b1' (138 aa).

The N-terminal stretch at methionine 1–glycine 16 is a signal peptide. Disulfide bonds link cysteine 42-cysteine 131, cysteine 44-cysteine 60, cysteine 59-cysteine 111, cysteine 65-cysteine 138, cysteine 66-cysteine 104, cysteine 73-cysteine 97, and cysteine 91-cysteine 102. Tyrosine 43, glycine 45, and glycine 47 together coordinate Ca(2+). Histidine 63 is a catalytic residue. Aspartate 64 is a Ca(2+) binding site. Aspartate 105 is a catalytic residue.

The cofactor is Ca(2+). As to expression, expressed by the venom gland.

It is found in the secreted. The enzyme catalyses a 1,2-diacyl-sn-glycero-3-phosphocholine + H2O = a 1-acyl-sn-glycero-3-phosphocholine + a fatty acid + H(+). Functionally, exhibits high hydrolytic activities and shows strong preference for the anionic micelles (dPPC with deoxycholate) to the zwitterionic micelles (dPPC with Triton X-100). PLA2 catalyzes the calcium-dependent hydrolysis of the 2-acyl groups in 3-sn-phosphoglycerides. The polypeptide is Basic phospholipase A2 DsM-b1/DsM-b1' (Daboia siamensis (Eastern Russel's viper)).